We begin with the raw amino-acid sequence, 475 residues long: Ribulose bisphosphate carboxylase large chain (475 aa).

Residues 1 to 2 constitute a propeptide that is removed on maturation; that stretch reads MS. Pro-3 carries the post-translational modification N-acetylproline. At Lys-14 the chain carries N6,N6,N6-trimethyllysine. Substrate-binding residues include Asn-123 and Thr-173. The active-site Proton acceptor is the Lys-175. Lys-177 is a substrate binding site. 3 residues coordinate Mg(2+): Lys-201, Asp-203, and Glu-204. Lys-201 is subject to N6-carboxylysine. His-294 functions as the Proton acceptor in the catalytic mechanism. Substrate-binding residues include Arg-295, His-327, and Ser-379.

It belongs to the RuBisCO large chain family. Type I subfamily. In terms of assembly, heterohexadecamer of 8 large chains and 8 small chains; disulfide-linked. The disulfide link is formed within the large subunit homodimers. Requires Mg(2+) as cofactor. Post-translationally, the disulfide bond which can form in the large chain dimeric partners within the hexadecamer appears to be associated with oxidative stress and protein turnover.

The protein localises to the plastid. It is found in the chloroplast. It catalyses the reaction 2 (2R)-3-phosphoglycerate + 2 H(+) = D-ribulose 1,5-bisphosphate + CO2 + H2O. The enzyme catalyses D-ribulose 1,5-bisphosphate + O2 = 2-phosphoglycolate + (2R)-3-phosphoglycerate + 2 H(+). In terms of biological role, ruBisCO catalyzes two reactions: the carboxylation of D-ribulose 1,5-bisphosphate, the primary event in carbon dioxide fixation, as well as the oxidative fragmentation of the pentose substrate in the photorespiration process. Both reactions occur simultaneously and in competition at the same active site. In Staurastrum punctulatum (Green alga), this protein is Ribulose bisphosphate carboxylase large chain.